The primary structure comprises 921 residues: Valine--tRNA ligase (921 aa).

The short motif at Pro-40–His-50 is the 'HIGH' region element. The 'KMSKS' region motif lies at Lys-522–Ser-526. Residue Lys-525 participates in ATP binding. The stretch at Met-849–Leu-921 forms a coiled coil.

It belongs to the class-I aminoacyl-tRNA synthetase family. ValS type 1 subfamily. As to quaternary structure, monomer.

It is found in the cytoplasm. The enzyme catalyses tRNA(Val) + L-valine + ATP = L-valyl-tRNA(Val) + AMP + diphosphate. In terms of biological role, catalyzes the attachment of valine to tRNA(Val). As ValRS can inadvertently accommodate and process structurally similar amino acids such as threonine, to avoid such errors, it has a 'posttransfer' editing activity that hydrolyzes mischarged Thr-tRNA(Val) in a tRNA-dependent manner. The polypeptide is Valine--tRNA ligase (Legionella pneumophila (strain Lens)).